The sequence spans 609 residues: Glutamine--fructose-6-phosphate aminotransferase [isomerizing] (609 aa).

Residue cysteine 2 is the Nucleophile; for GATase activity of the active site. Residues 2-217 (CGIVGYIGRR…EGWLAELTPE (216 aa)) form the Glutamine amidotransferase type-2 domain. 2 consecutive SIS domains span residues 286-425 (SAAE…QNGR) and 458-599 (AAEA…VDKP). Lysine 604 serves as the catalytic For Fru-6P isomerization activity.

In terms of assembly, homodimer.

The protein resides in the cytoplasm. The enzyme catalyses D-fructose 6-phosphate + L-glutamine = D-glucosamine 6-phosphate + L-glutamate. Functionally, catalyzes the first step in hexosamine metabolism, converting fructose-6P into glucosamine-6P using glutamine as a nitrogen source. The chain is Glutamine--fructose-6-phosphate aminotransferase [isomerizing] from Symbiobacterium thermophilum (strain DSM 24528 / JCM 14929 / IAM 14863 / T).